Consider the following 212-residue polypeptide: Imidazole glycerol phosphate synthase subunit HisH (212 aa).

A Glutamine amidotransferase type-1 domain is found at 3-211 (LIAVIDYDMG…VQQVQKLALV (209 aa)). Cys81 acts as the Nucleophile in catalysis. Active-site residues include His186 and Glu188.

Heterodimer of HisH and HisF.

Its subcellular location is the cytoplasm. The enzyme catalyses 5-[(5-phospho-1-deoxy-D-ribulos-1-ylimino)methylamino]-1-(5-phospho-beta-D-ribosyl)imidazole-4-carboxamide + L-glutamine = D-erythro-1-(imidazol-4-yl)glycerol 3-phosphate + 5-amino-1-(5-phospho-beta-D-ribosyl)imidazole-4-carboxamide + L-glutamate + H(+). It catalyses the reaction L-glutamine + H2O = L-glutamate + NH4(+). It functions in the pathway amino-acid biosynthesis; L-histidine biosynthesis; L-histidine from 5-phospho-alpha-D-ribose 1-diphosphate: step 5/9. IGPS catalyzes the conversion of PRFAR and glutamine to IGP, AICAR and glutamate. The HisH subunit catalyzes the hydrolysis of glutamine to glutamate and ammonia as part of the synthesis of IGP and AICAR. The resulting ammonia molecule is channeled to the active site of HisF. The polypeptide is Imidazole glycerol phosphate synthase subunit HisH (Microcystis aeruginosa (strain NIES-843 / IAM M-2473)).